The following is a 172-amino-acid chain: Large ribosomal subunit protein uL10 (172 aa).

This sequence belongs to the universal ribosomal protein uL10 family. As to quaternary structure, part of the ribosomal stalk of the 50S ribosomal subunit. The N-terminus interacts with L11 and the large rRNA to form the base of the stalk. The C-terminus forms an elongated spine to which L12 dimers bind in a sequential fashion forming a multimeric L10(L12)X complex.

Its function is as follows. Forms part of the ribosomal stalk, playing a central role in the interaction of the ribosome with GTP-bound translation factors. The chain is Large ribosomal subunit protein uL10 from Rhodospirillum rubrum (strain ATCC 11170 / ATH 1.1.1 / DSM 467 / LMG 4362 / NCIMB 8255 / S1).